A 258-amino-acid chain; its full sequence is Transmembrane O-methyltransferase homolog (258 aa).

Residues Glu104, 106–107 (GT), Ser112, Glu130, and Ser160 contribute to the S-adenosyl-L-methionine site.

This sequence belongs to the class I-like SAM-binding methyltransferase superfamily. Cation-dependent O-methyltransferase family. Interacts with LHFPL5, PCDH15, TMC1, TMC2 and TMIE. Interacts directly with TMC1. The interaction of TOMT with TMC1 and TMC2 is required for the transportation of TMC1/2 into the stereocilia of hair cells.

Its subcellular location is the cytoplasm. The protein localises to the endoplasmic reticulum. The enzyme catalyses a catechol + S-adenosyl-L-methionine = a guaiacol + S-adenosyl-L-homocysteine + H(+). In terms of biological role, catalyzes the O-methylation, and thereby the inactivation, of catecholamine neurotransmitters and catechol hormones. Required for auditory function. Component of the cochlear hair cell's mechanotransduction (MET) machinery. Involved in the assembly of the asymmetric tip-link MET complex. Required for transportation of TMC1 and TMC2 proteins into the mechanically sensitive stereocilia of the hair cells. The function in MET is independent of the enzymatic activity. The polypeptide is Transmembrane O-methyltransferase homolog (Rattus norvegicus (Rat)).